Consider the following 303-residue polypeptide: N-acetylmuramic acid 6-phosphate etherase (303 aa).

In terms of domain architecture, SIS spans 60-223; sequence ATASLQAGGR…STGVMVKLGK (164 aa). Glu88 serves as the catalytic Proton donor. The active site involves Glu119.

It belongs to the GCKR-like family. MurNAc-6-P etherase subfamily. As to quaternary structure, homodimer.

The catalysed reaction is N-acetyl-D-muramate 6-phosphate + H2O = N-acetyl-D-glucosamine 6-phosphate + (R)-lactate. Its pathway is amino-sugar metabolism; 1,6-anhydro-N-acetylmuramate degradation. The protein operates within amino-sugar metabolism; N-acetylmuramate degradation. It functions in the pathway cell wall biogenesis; peptidoglycan recycling. In terms of biological role, specifically catalyzes the cleavage of the D-lactyl ether substituent of MurNAc 6-phosphate, producing GlcNAc 6-phosphate and D-lactate. Together with AnmK, is also required for the utilization of anhydro-N-acetylmuramic acid (anhMurNAc) either imported from the medium or derived from its own cell wall murein, and thus plays a role in cell wall recycling. This Pectobacterium atrosepticum (strain SCRI 1043 / ATCC BAA-672) (Erwinia carotovora subsp. atroseptica) protein is N-acetylmuramic acid 6-phosphate etherase.